The primary structure comprises 149 residues: Transcriptional repressor NrdR (149 aa).

A zinc finger lies at 3 to 34; the sequence is CPFCAAEETKVVDSRLAADGYQIRRRRECTSC. Residues 49 to 139 form the ATP-cone domain; it reads PYVIKNNGNR…VYLSFDDIEE (91 aa).

This sequence belongs to the NrdR family. The cofactor is Zn(2+).

Its function is as follows. Negatively regulates transcription of bacterial ribonucleotide reductase nrd genes and operons by binding to NrdR-boxes. The polypeptide is Transcriptional repressor NrdR (Actinobacillus pleuropneumoniae serotype 5b (strain L20)).